A 1034-amino-acid chain; its full sequence is Potassium-transporting ATPase alpha chain 1 (1034 aa).

At 1-97 the chain is on the cytoplasmic side; it reads MGKAENYELY…NALRPPRGTP (97 aa). Residues tyrosine 7 and tyrosine 10 each carry the phosphotyrosine modification. The disordered stretch occupies residues 14–41; sequence LGSGPGGDMTAKMSKKKAGGGGGKKKEK. Positions 26-39 are enriched in basic residues; sequence MSKKKAGGGGGKKK. The residue at position 27 (serine 27) is a Phosphoserine. The helical transmembrane segment at 98 to 118 threads the bilayer; sequence EYVKFARQLAGGLQCLMWVAA. Topologically, residues 119–141 are lumenal; the sequence is AICLIAFAIQASEGDLTTDDNLY. A helical membrane pass occupies residues 142–162; sequence LAVALIAVVVVTGCFGYYQEF. The Cytoplasmic portion of the chain corresponds to 163–298; the sequence is KSTNIIASFK…NEKTPIAIEI (136 aa). A helical transmembrane segment spans residues 299-318; that stretch reads EHFVDIIAGLAILFGATFFV. Topologically, residues 319–330 are lumenal; it reads VAMCIGYTFLRA. A helical membrane pass occupies residues 331–348; that stretch reads MVFFMAIVVAYVPEGLLA. The K(+) site is built by valine 339, alanine 340, valine 342, and glutamate 344. The Cytoplasmic segment spans residues 349–782; the sequence is TVTVCLSLTA…EQGRLIFDNL (434 aa). Residue aspartate 386 is the 4-aspartylphosphate intermediate of the active site. Mg(2+)-binding residues include aspartate 386 and threonine 388. Phosphoserine occurs at positions 462 and 600. Residues aspartate 727 and aspartate 731 each coordinate Mg(2+). A helical transmembrane segment spans residues 783–802; sequence KKSIAYTLTKNIPELTPYLI. Glutamate 796 lines the K(+) pocket. The Lumenal segment spans residues 803 to 812; that stretch reads YITVSVPLPL. The helical transmembrane segment at 813 to 833 threads the bilayer; it reads GCITILFIELCTDIFPSVSLA. Glutamate 821 is a K(+) binding site. The Cytoplasmic segment spans residues 834–853; sequence YEKAESDIMHLRPRNPKRDR. Serine 839 carries the phosphoserine modification. Residues 854–876 form a helical membrane-spanning segment; sequence LVNEPLAAYSYFQIGAIQSFAGF. Over 877–928 the chain is Lumenal; sequence ADYFTAMAQEGWFPLLCVGLRPQWEDHHLQDLQDSYGQEWTFGQRLYQQYTC. Residues 929–948 traverse the membrane as a helical segment; it reads YTVFFISIEMCQIADVLIRK. Topologically, residues 949-962 are cytoplasmic; the sequence is TRRLSVFQQGFFRN. Residue serine 953 is modified to Phosphoserine; by PKA. A helical transmembrane segment spans residues 963–981; the sequence is KILVIAIVFQVCIGCFLCY. Topologically, residues 982–996 are lumenal; sequence CPGMPNIFNFMPIRF. The chain crosses the membrane as a helical span at residues 997-1017; it reads QWWLVPMPFGLLIFVYDEIRK. Topologically, residues 1018 to 1034 are cytoplasmic; that stretch reads LGVRCCPGSWWDQELYY.

The protein belongs to the cation transport ATPase (P-type) (TC 3.A.3) family. Type IIC subfamily. The gastric H(+)/K(+) ATPase pump is composed of the catalytic alpha subunit ATP4A and the regulatory beta subunit ATP4B. Interacts (via the P-domain) with ATP4B (via N-terminus); this interaction stabilizes the lumenal-open E2 conformation state and prevents the reverse reaction of the transport cycle. In terms of tissue distribution, expressed in parietal cells (at protein level).

The protein localises to the apical cell membrane. It catalyses the reaction K(+)(out) + ATP + H2O + H(+)(in) = K(+)(in) + ADP + phosphate + 2 H(+)(out). In terms of biological role, the catalytic subunit of the gastric H(+)/K(+) ATPase pump which transports H(+) ions in exchange for K(+) ions across the apical membrane of parietal cells. Uses ATP as an energy source to pump H(+) ions to the gastric lumen while transporting K(+) ion from the lumen into the cell. Remarkably generates a million-fold proton gradient across the gastric parietal cell membrane, acidifying the gastric juice down to pH 1. Within a transport cycle, the transfer of a H(+) ion across the membrane is coupled to ATP hydrolysis and is associated with a transient phosphorylation that shifts the pump conformation from inward-facing (E1) to outward-facing state (E2). The release of the H(+) ion in the stomach lumen is followed by binding of K(+) ion converting the pump conformation back to the E1 state. This chain is Potassium-transporting ATPase alpha chain 1, found in Mus musculus (Mouse).